The sequence spans 310 residues: Putative HTH-type transcriptional regulatory protein M1425_1284 (310 aa).

In terms of domain architecture, HTH cro/C1-type spans 125–180 (LKHKREEMGYSIGDVAKFLGVSRKAIYDYEKGDSDVSLEVAEKLIDLFGDDIIGDV). A DNA-binding region (H-T-H motif) is located at residues 136–155 (IGDVAKFLGVSRKAIYDYEK).

The polypeptide is Putative HTH-type transcriptional regulatory protein M1425_1284 (Saccharolobus islandicus (strain M.14.25 / Kamchatka #1) (Sulfolobus islandicus)).